Reading from the N-terminus, the 217-residue chain is Phosphatidylcholine synthase (217 aa).

Residues alanine 1–leucine 8 form a helical membrane-spanning segment. Residues valine 9–tyrosine 16 are Periplasmic-facing. A helical transmembrane segment spans residues isoleucine 17–alanine 37. Over arginine 38–aspartate 50 the chain is Cytoplasmic. The helical transmembrane segment at glycine 51–leucine 71 threads the bilayer. Topologically, residues leucine 72–methionine 77 are periplasmic. The helical transmembrane segment at leucine 78 to phenylalanine 98 threads the bilayer. The Cytoplasmic portion of the chain corresponds to cysteine 99–aspartate 107. The chain crosses the membrane as a helical span at residues histidine 108–asparagine 128. Residue threonine 129 is a topological domain, periplasmic. Residues serine 130–valine 149 traverse the membrane as a helical segment. Topologically, residues lysine 150–arginine 164 are cytoplasmic. The chain crosses the membrane as a helical span at residues isoleucine 165–leucine 185. At isoleucine 186–threonine 191 the chain is on the periplasmic side. The chain crosses the membrane as a helical span at residues asparagine 192–tyrosine 212. Residues arginine 213–proline 217 lie on the Cytoplasmic side of the membrane.

The protein belongs to the CDP-alcohol phosphatidyltransferase class-I family. Requires Mn(2+) as cofactor.

The protein resides in the cell inner membrane. It carries out the reaction a CDP-1,2-diacyl-sn-glycerol + choline = a 1,2-diacyl-sn-glycero-3-phosphocholine + CMP + H(+). In terms of biological role, condenses choline with CDP-diglyceride to produce phosphatidylcholine and CMP. The sequence is that of Phosphatidylcholine synthase from Legionella bozemanae (Fluoribacter bozemanae).